A 464-amino-acid polypeptide reads, in one-letter code: MNTLFDKIWDAHVVTTVEDGPTQLYIDRLYCHEVTSPQAFAGLRERGIKVLRPEKVFCMPDHNTPTHDQDKPIEDPISKTQVDTLTKNAKDFGLTHFGMMHPKNGIIHVVGPERALTLPGMTIVCGDSHTSTHGAMGAIAFGIGTSEVEMVLASQCILQSRPKTMRITVDGELGKGVTAKDVALYMMSKMTTSGATGYFVEYAGSAIRNLTMEGRLTLCNLSIEMGARGGMVAPDEVTFEYIKGRENAPQGEAWDQAMEYWKTLKSDDDAVFDQEVRFDAADIEPMITYGTNPGMGMGITQNIPTTEGMGEAAQVSFKKSMEYMGFQPGESLLGKKIDYVFLGACTNGRIEDFRAFASLVKGRRKADNVIAWLVPGSWMVDAQIRKEGIDKILTEAGFAIRQPGCSACLAMNDDKIPAGKYSVSTSNRNFEGRQGPGARTLLASPLVAAAAAVTGVITDPRELM.

[4Fe-4S] cluster-binding residues include Cys-345, Cys-405, and Cys-408.

It belongs to the aconitase/IPM isomerase family. LeuC type 1 subfamily. In terms of assembly, heterodimer of LeuC and LeuD. [4Fe-4S] cluster serves as cofactor.

It carries out the reaction (2R,3S)-3-isopropylmalate = (2S)-2-isopropylmalate. Its pathway is amino-acid biosynthesis; L-leucine biosynthesis; L-leucine from 3-methyl-2-oxobutanoate: step 2/4. In terms of biological role, catalyzes the isomerization between 2-isopropylmalate and 3-isopropylmalate, via the formation of 2-isopropylmaleate. The chain is 3-isopropylmalate dehydratase large subunit from Bacteroides thetaiotaomicron (strain ATCC 29148 / DSM 2079 / JCM 5827 / CCUG 10774 / NCTC 10582 / VPI-5482 / E50).